We begin with the raw amino-acid sequence, 239 residues long: MAFRIDILTLFPDMFNIFNHSIMGKALEKDIININTINIRDFTEDKHKKVDDYPYGGGAGMVMSLQPIVDSLKRVKESNRGKVIFLGPRGKTFSHEMAKELSKEEELIFLCGHYEGIDERCYDYIDLEISLGDFILTGGEMACIPIVDSICRLIPGVLGKNESFMEESFYEGLLEYPHYTRPENFKGKEVPKILLSGHHENIRKWRKSKSLKITKKRRPDLFKKYNLTKEDEKLLSSEE.

Residues Gly-112 and 131–136 contribute to the S-adenosyl-L-methionine site; that span reads LGDFIL.

This sequence belongs to the RNA methyltransferase TrmD family. Homodimer.

It is found in the cytoplasm. The enzyme catalyses guanosine(37) in tRNA + S-adenosyl-L-methionine = N(1)-methylguanosine(37) in tRNA + S-adenosyl-L-homocysteine + H(+). Functionally, specifically methylates guanosine-37 in various tRNAs. The chain is tRNA (guanine-N(1)-)-methyltransferase from Clostridium tetani (strain Massachusetts / E88).